A 117-amino-acid chain; its full sequence is Prefoldin subunit beta (117 aa).

Belongs to the prefoldin subunit beta family. Heterohexamer of two alpha and four beta subunits.

The protein resides in the cytoplasm. Molecular chaperone capable of stabilizing a range of proteins. Seems to fulfill an ATP-independent, HSP70-like function in archaeal de novo protein folding. The polypeptide is Prefoldin subunit beta (Pyrococcus furiosus (strain ATCC 43587 / DSM 3638 / JCM 8422 / Vc1)).